The chain runs to 445 residues: 3-phosphoshikimate 1-carboxyvinyltransferase (445 aa).

K34, S35, and R39 together coordinate 3-phosphoshikimate. K34 contributes to the phosphoenolpyruvate binding site. Phosphoenolpyruvate-binding residues include G112 and R140. Positions 186, 187, 188, 216, 331, and 358 each coordinate 3-phosphoshikimate. Q188 provides a ligand contact to phosphoenolpyruvate. E331 acts as the Proton acceptor in catalysis. Phosphoenolpyruvate is bound by residues R362, R403, and K428.

This sequence belongs to the EPSP synthase family. As to quaternary structure, monomer.

It localises to the cytoplasm. It catalyses the reaction 3-phosphoshikimate + phosphoenolpyruvate = 5-O-(1-carboxyvinyl)-3-phosphoshikimate + phosphate. The protein operates within metabolic intermediate biosynthesis; chorismate biosynthesis; chorismate from D-erythrose 4-phosphate and phosphoenolpyruvate: step 6/7. Catalyzes the transfer of the enolpyruvyl moiety of phosphoenolpyruvate (PEP) to the 5-hydroxyl of shikimate-3-phosphate (S3P) to produce enolpyruvyl shikimate-3-phosphate and inorganic phosphate. The chain is 3-phosphoshikimate 1-carboxyvinyltransferase from Kocuria rhizophila (strain ATCC 9341 / DSM 348 / NBRC 103217 / DC2201).